We begin with the raw amino-acid sequence, 422 residues long: uncharacterized protein (422 aa).

Disordered regions lie at residues 1–21 (MRDN…TTYD), 158–218 (TAKS…TEQV), and 246–271 (DFGT…PWLT). The span at 11 to 21 (AGSNTQQTTYD) shows a compositional bias: polar residues. Residues 170–199 (SKSSNGSSSTSTTQRGGSSNENKVKALQVA) are compositionally biased toward low complexity. Composition is skewed to polar residues over residues 205–216 (GSQGNSGDQGTE) and 250–261 (APSSSGSGTQDG). Residues 262–271 (TPTPWTPWLT) show a composition bias toward low complexity.

It belongs to the adhesin P1 family.

This is an uncharacterized protein from Mycoplasma pneumoniae (strain ATCC 29342 / M129 / Subtype 1) (Mycoplasmoides pneumoniae).